Consider the following 339-residue polypeptide: Ketol-acid reductoisomerase (NADP(+)) (339 aa).

One can recognise a KARI N-terminal Rossmann domain in the interval 1–182; that stretch reads MRVYYDRDAD…GGGRAGIIET (182 aa). NADP(+) is bound by residues 24–27, arginine 48, serine 51, serine 53, and 83–86; these read YGSQ and DELQ. The active site involves histidine 108. Glycine 134 is a binding site for NADP(+). A KARI C-terminal knotted domain is found at 183–328; the sequence is TFREECETDL…ARLRDMMPWI (146 aa). Residues aspartate 191, glutamate 195, glutamate 227, and glutamate 231 each coordinate Mg(2+). Serine 252 serves as a coordination point for substrate.

Belongs to the ketol-acid reductoisomerase family. Mg(2+) serves as cofactor.

It carries out the reaction (2R)-2,3-dihydroxy-3-methylbutanoate + NADP(+) = (2S)-2-acetolactate + NADPH + H(+). It catalyses the reaction (2R,3R)-2,3-dihydroxy-3-methylpentanoate + NADP(+) = (S)-2-ethyl-2-hydroxy-3-oxobutanoate + NADPH + H(+). The protein operates within amino-acid biosynthesis; L-isoleucine biosynthesis; L-isoleucine from 2-oxobutanoate: step 2/4. It functions in the pathway amino-acid biosynthesis; L-valine biosynthesis; L-valine from pyruvate: step 2/4. Its function is as follows. Involved in the biosynthesis of branched-chain amino acids (BCAA). Catalyzes an alkyl-migration followed by a ketol-acid reduction of (S)-2-acetolactate (S2AL) to yield (R)-2,3-dihydroxy-isovalerate. In the isomerase reaction, S2AL is rearranged via a Mg-dependent methyl migration to produce 3-hydroxy-3-methyl-2-ketobutyrate (HMKB). In the reductase reaction, this 2-ketoacid undergoes a metal-dependent reduction by NADPH to yield (R)-2,3-dihydroxy-isovalerate. The chain is Ketol-acid reductoisomerase (NADP(+)) from Nitrobacter winogradskyi (strain ATCC 25391 / DSM 10237 / CIP 104748 / NCIMB 11846 / Nb-255).